We begin with the raw amino-acid sequence, 309 residues long: Nucleoside kinase (309 aa).

Residues D16, G42, and N46 each coordinate substrate. Position 108 (Q108) interacts with ATP. Substrate is bound by residues 110 to 112 (SYF) and Q166. ATP-binding positions include N189 and 217–223 (KTYGKEG). D249 contacts substrate. The active-site Proton acceptor is D249.

Belongs to the carbohydrate kinase PfkB family. Homodimer. The cofactor is Mg(2+).

Functionally, catalyzes the phosphorylation of a wide range of nucleosides to yield nucleoside monophosphates, using ATP, ITP or GTP as phosphate donor. The chain is Nucleoside kinase from Methanothermobacter thermautotrophicus (strain ATCC 29096 / DSM 1053 / JCM 10044 / NBRC 100330 / Delta H) (Methanobacterium thermoautotrophicum).